The primary structure comprises 328 residues: UPF0421 protein SSP0904 (328 aa).

4 helical membrane passes run 26-46, 61-81, 84-104, and 132-152; these read LFCL…IVTI, LPAT…FGDQ, FAYA…NLHV, and LLTA…ILPP.

It belongs to the UPF0421 family.

The protein resides in the cell membrane. This chain is UPF0421 protein SSP0904, found in Staphylococcus saprophyticus subsp. saprophyticus (strain ATCC 15305 / DSM 20229 / NCIMB 8711 / NCTC 7292 / S-41).